The primary structure comprises 129 residues: Large ribosomal subunit protein uL22 (129 aa).

It belongs to the universal ribosomal protein uL22 family. As to quaternary structure, part of the 50S ribosomal subunit.

In terms of biological role, this protein binds specifically to 23S rRNA; its binding is stimulated by other ribosomal proteins, e.g. L4, L17, and L20. It is important during the early stages of 50S assembly. It makes multiple contacts with different domains of the 23S rRNA in the assembled 50S subunit and ribosome. Functionally, the globular domain of the protein is located near the polypeptide exit tunnel on the outside of the subunit, while an extended beta-hairpin is found that lines the wall of the exit tunnel in the center of the 70S ribosome. This Rhizobium etli (strain ATCC 51251 / DSM 11541 / JCM 21823 / NBRC 15573 / CFN 42) protein is Large ribosomal subunit protein uL22.